Reading from the N-terminus, the 623-residue chain is Chaperone protein HtpG (623 aa).

Residues 1 to 336 (MVSKQQTMGF…ASDLPLNISR (336 aa)) form an a; substrate-binding region. The interval 337-550 (EILQDNKQVE…EQDMGLEMQR (214 aa)) is b. The c stretch occupies residues 551–623 (ILQAAGQQVP…NRVNRLLVSS (73 aa)).

The protein belongs to the heat shock protein 90 family. In terms of assembly, homodimer.

The protein resides in the cytoplasm. Molecular chaperone. Has ATPase activity. The protein is Chaperone protein HtpG of Legionella pneumophila subsp. pneumophila (strain Philadelphia 1 / ATCC 33152 / DSM 7513).